Consider the following 211-residue polypeptide: MKPFKALTARQQEVYDLLKRHLENTGMPPTRAEISKELGFRSPNAAEEHLKALARKGVIEIISGTSRGIRLLLEESESDENQGLPLVGRVAAGEPILAEQHIEGTYQVDANMFKPQANFLLKVYGQSMKNIGILDGDLLAVHSTKDVRNGQIVVARIEDEVTVKRLERKGSVIYLHAENEEFAPIVVDLNQQPNFEIEGIAVGIIRNNAWM.

Positions 31 to 51 form a DNA-binding region, H-T-H motif; the sequence is RAEISKELGFRSPNAAEEHLK. Residues S127 and K164 each act as for autocatalytic cleavage activity in the active site.

It belongs to the peptidase S24 family. As to quaternary structure, homodimer.

It catalyses the reaction Hydrolysis of Ala-|-Gly bond in repressor LexA.. In terms of biological role, represses a number of genes involved in the response to DNA damage (SOS response), including recA and lexA. In the presence of single-stranded DNA, RecA interacts with LexA causing an autocatalytic cleavage which disrupts the DNA-binding part of LexA, leading to derepression of the SOS regulon and eventually DNA repair. This chain is LexA repressor, found in Pasteurella multocida (strain Pm70).